Reading from the N-terminus, the 506-residue chain is TOM1-like protein 3 (506 aa).

One can recognise a VHS domain in the interval 12–141; the sequence is ATNDMLIGPD…ELRSAGIEFP (130 aa). In terms of domain architecture, GAT spans 180–268; that stretch reads DASALSMEEI…VLQHHDDKAK (89 aa). Disordered regions lie at residues 266-328, 351-384, and 398-477; these read KAKG…PPSS, ETFENVKPPSTSQSSNHDYSAPIFDEPVPQSKSP, and EQLP…PEDI. Positions 288–298 are enriched in acidic residues; that stretch reads DDDDDESDDDF. A Phosphoserine modification is found at Ser294. The segment covering 358–368 has biased composition (polar residues); that stretch reads PPSTSQSSNHD. Ser383 carries the post-translational modification Phosphoserine. Over residues 450-460 the composition is skewed to polar residues; the sequence is QSRNLSLNPTA. Basic and acidic residues predominate over residues 468–477; it reads PKKDDKPEDI.

The protein belongs to the TOM1 family. Preferentially expressed in cauline leaves.

Its subcellular location is the membrane. Its function is as follows. Might contribute to the loading of the ESCRT machinery. The sequence is that of TOM1-like protein 3 from Arabidopsis thaliana (Mouse-ear cress).